Here is a 635-residue protein sequence, read N- to C-terminus: Threonine--tRNA ligase (635 aa).

The TGS domain occupies 1-61 (MIQITLPDNS…DHDARLQIIT (61 aa)). The segment at 242-533 (DHRKLGKELD…LIEHHAGALP (292 aa)) is catalytic. Cys-333, His-384, and His-510 together coordinate Zn(2+).

Belongs to the class-II aminoacyl-tRNA synthetase family. As to quaternary structure, homodimer. Zn(2+) is required as a cofactor.

The protein resides in the cytoplasm. It carries out the reaction tRNA(Thr) + L-threonine + ATP = L-threonyl-tRNA(Thr) + AMP + diphosphate + H(+). Catalyzes the attachment of threonine to tRNA(Thr) in a two-step reaction: L-threonine is first activated by ATP to form Thr-AMP and then transferred to the acceptor end of tRNA(Thr). Also edits incorrectly charged L-seryl-tRNA(Thr). The protein is Threonine--tRNA ligase of Variovorax paradoxus (strain S110).